The following is a 58-amino-acid chain: UPF0391 membrane protein Patl_4137 (58 aa).

2 consecutive transmembrane segments (helical) span residues 4-24 (WALT…GGIA) and 27-47 (AAGI…LSLV).

It belongs to the UPF0391 family.

It is found in the cell membrane. This Pseudoalteromonas atlantica (strain T6c / ATCC BAA-1087) protein is UPF0391 membrane protein Patl_4137.